We begin with the raw amino-acid sequence, 555 residues long: Glucosylglycerate phosphorylase (555 aa).

Residue aspartate 231 is the Nucleophile of the active site.

The protein belongs to the glycosyl hydrolase 13 family. Glucosylglycerate phosphorylase subfamily.

The catalysed reaction is (2R)-2-O-(alpha-D-glucopyranosyl)-glycerate + phosphate = (R)-glycerate + alpha-D-glucose 1-phosphate. Functionally, catalyzes the reversible phosphorolysis of glucosylglycerate into alpha-D-glucose 1-phosphate (Glc1P) and D-glycerate. May be a regulator of intracellular levels of glucosylglycerate, a compatible solute that primarily protects organisms facing salt stress and very specific nutritional constraints. Has a very strict substrate specificity. Cannot catalyze the phosphorolysis of sucrose or synthesize sucrose from Glc1P and D-fructose. This chain is Glucosylglycerate phosphorylase, found in Allomeiothermus silvanus (strain ATCC 700542 / DSM 9946 / NBRC 106475 / NCIMB 13440 / VI-R2) (Thermus silvanus).